An 81-amino-acid chain; its full sequence is Costars family protein ABRACL (81 aa).

The protein belongs to the costars family.

The protein is Costars family protein ABRACL of Coturnix coturnix (Common quail).